The sequence spans 687 residues: Guanine-nucleotide exchange factor YEL1 (687 aa).

One can recognise an SEC7 domain in the interval 57–264 (ILQNKEAAND…SEYYKTLNET (208 aa)). The disordered stretch occupies residues 63–97 (AANDEKPVIPTTDTATAGTGTEDISSTQSEETDQN). Residues 73 to 83 (TTDTATAGTGT) show a composition bias toward low complexity. T290 carries the phosphothreonine modification. S293 and S299 each carry phosphoserine. The PH domain maps to 412–551 (TSRRTSLSYL…DCINFWAGRI (140 aa)).

This sequence belongs to the YEL1 family.

The protein resides in the cytoplasm. Its subcellular location is the cell membrane. It localises to the bud neck. The protein localises to the bud tip. Its function is as follows. Guanine nucleotide exchange factor for ARF3 required for localization of ARF3 to the bud neck and tip and involved in actin patch polarization. This chain is Guanine-nucleotide exchange factor YEL1 (YEL1), found in Saccharomyces cerevisiae (strain JAY291) (Baker's yeast).